We begin with the raw amino-acid sequence, 170 residues long: Probable Brix domain-containing ribosomal biogenesis protein (170 aa).

Positions 6–170 (TRIVITSSRD…IKFLKMILEA (165 aa)) constitute a Brix domain.

Functionally, probably involved in the biogenesis of the ribosome. This Saccharolobus solfataricus (strain ATCC 35092 / DSM 1617 / JCM 11322 / P2) (Sulfolobus solfataricus) protein is Probable Brix domain-containing ribosomal biogenesis protein.